A 146-amino-acid chain; its full sequence is Cell division protein SepF (146 aa).

Belongs to the SepF family. In terms of assembly, homodimer. Interacts with FtsZ.

It localises to the cytoplasm. Cell division protein that is part of the divisome complex and is recruited early to the Z-ring. Probably stimulates Z-ring formation, perhaps through the cross-linking of FtsZ protofilaments. Its function overlaps with FtsA. The sequence is that of Cell division protein SepF from Alkaliphilus oremlandii (strain OhILAs) (Clostridium oremlandii (strain OhILAs)).